The primary structure comprises 158 residues: SsrA-binding protein (158 aa).

Positions 131-158 (GKKTHDKRETEKKRDWNREKARLLRDRG) are disordered. Positions 136 to 158 (DKRETEKKRDWNREKARLLRDRG) are enriched in basic and acidic residues.

This sequence belongs to the SmpB family.

It is found in the cytoplasm. Functionally, required for rescue of stalled ribosomes mediated by trans-translation. Binds to transfer-messenger RNA (tmRNA), required for stable association of tmRNA with ribosomes. tmRNA and SmpB together mimic tRNA shape, replacing the anticodon stem-loop with SmpB. tmRNA is encoded by the ssrA gene; the 2 termini fold to resemble tRNA(Ala) and it encodes a 'tag peptide', a short internal open reading frame. During trans-translation Ala-aminoacylated tmRNA acts like a tRNA, entering the A-site of stalled ribosomes, displacing the stalled mRNA. The ribosome then switches to translate the ORF on the tmRNA; the nascent peptide is terminated with the 'tag peptide' encoded by the tmRNA and targeted for degradation. The ribosome is freed to recommence translation, which seems to be the essential function of trans-translation. This chain is SsrA-binding protein, found in Brucella ovis (strain ATCC 25840 / 63/290 / NCTC 10512).